The following is a 1322-amino-acid chain: Phosphoribosylformylglycinamidine synthase (1322 aa).

Residue 300–311 (GASTGAGGEIRD) participates in ATP binding. Residues 593–608 (QQTPQRANHTETSPTP) show a composition bias toward polar residues. The tract at residues 593–613 (QQTPQRANHTETSPTPNTLPP) is disordered. ATP is bound at residue Ala-702. 4 residues coordinate Mg(2+): Asp-703, Glu-742, Asn-746, and Asp-915. Residue Ser-917 coordinates ATP. The region spanning 1073–1322 (VAILREQGIN…LFRNARAWVG (250 aa)) is the Glutamine amidotransferase type-1 domain. Residue Cys-1166 is the Nucleophile of the active site. Residues His-1287 and Glu-1289 contribute to the active site.

In the N-terminal section; belongs to the FGAMS family. Monomer.

Its subcellular location is the cytoplasm. The enzyme catalyses N(2)-formyl-N(1)-(5-phospho-beta-D-ribosyl)glycinamide + L-glutamine + ATP + H2O = 2-formamido-N(1)-(5-O-phospho-beta-D-ribosyl)acetamidine + L-glutamate + ADP + phosphate + H(+). The protein operates within purine metabolism; IMP biosynthesis via de novo pathway; 5-amino-1-(5-phospho-D-ribosyl)imidazole from N(2)-formyl-N(1)-(5-phospho-D-ribosyl)glycinamide: step 1/2. In terms of biological role, phosphoribosylformylglycinamidine synthase involved in the purines biosynthetic pathway. Catalyzes the ATP-dependent conversion of formylglycinamide ribonucleotide (FGAR) and glutamine to yield formylglycinamidine ribonucleotide (FGAM) and glutamate. This is Phosphoribosylformylglycinamidine synthase from Xylella fastidiosa (strain 9a5c).